A 184-amino-acid polypeptide reads, in one-letter code: UPF0398 protein OB1025 (184 aa).

Belongs to the UPF0398 family.

The polypeptide is UPF0398 protein OB1025 (Oceanobacillus iheyensis (strain DSM 14371 / CIP 107618 / JCM 11309 / KCTC 3954 / HTE831)).